The chain runs to 186 residues: MSGISGCPFFLWGLLALLGLALVISLIFNISHYVEKQRQDKMYSYSSDHTRVDEYYIEDTPIYGNLDDMISEPMDENCYEQMKARPEKSVNKMQEATPSAQATNETQMCYASLDHSVKGKRRKPRKQNTHFSDKDGDEQLHAIDASVSKTTLVDSFSPESQAVEENIHDDPIRLFGLIRAKREPIN.

Residues Met-1 to Cys-7 are Extracellular-facing. A helical; Signal-anchor for type III membrane protein membrane pass occupies residues Pro-8–Phe-28. At Asn-29–Asn-186 the chain is on the cytoplasmic side. Ser-46 is subject to Phosphoserine. The residue at position 79 (Tyr-79) is a Phosphotyrosine. The segment at Tyr-79–Met-82 is interaction with PIK3R1. Residues Ser-116–Leu-140 are disordered. The span at Lys-118 to Asn-128 shows a compositional bias: basic residues. Residues Phe-131–Leu-140 are compositionally biased toward basic and acidic residues.

Homodimer; disulfide-linked. Interacts with CD3Z. When phosphorylated, interacts with PIK3R1. Phosphorylated on tyrosines by LCK or FYN upon TCR activation. Strongly expressed in thymus, and to a lesser extent in spleen, lymph node and peripheral blood lymphocytes. Present in T-cells and NK cells, but not B-cells (at protein level).

The protein resides in the cell membrane. Its function is as follows. Stabilizes the TCR (T-cell antigen receptor)/CD3 complex at the surface of T-cells. This chain is T-cell receptor-associated transmembrane adapter 1 (TRAT1), found in Homo sapiens (Human).